Reading from the N-terminus, the 181-residue chain is MAIENCLQLSTSASVGTVAVKSHVHHLQPSSKVNVPTFRGLKRSFPALSSSVSSSSPRQFRYSSVVCKASEAVKEVQDVNDSSWKEFVLESEVPVMVDFWAPWCGPCKLIAPVIDELAKEYSGKIAVYKLNTDEAPGIATQYNIRSIPTVLFFKNGERKESIIGAVPKSTLTDSIEKYLSP.

A chloroplast-targeting transit peptide spans 1-67; that stretch reads MAIENCLQLS…RQFRYSSVVC (67 aa). The 113-residue stretch at 68 to 180 folds into the Thioredoxin domain; that stretch reads KASEAVKEVQ…LTDSIEKYLS (113 aa). Residues Cys104 and Cys107 each act as nucleophile in the active site. Residues Cys104 and Cys107 are joined by a disulfide bond.

Belongs to the thioredoxin family. Plant M-type subfamily. In terms of assembly, forms a complex with heterodimeric ferredoxin-thioredoxin reductase (FTR) and ferredoxin.

It localises to the plastid. Its subcellular location is the chloroplast. Its function is as follows. Participates in various redox reactions through the reversible oxidation of the active center dithiol to a disulfide. The M form is known to activate NADP-malate dehydrogenase. This is Thioredoxin M-type, chloroplastic from Spinacia oleracea (Spinach).